The sequence spans 342 residues: Guanine nucleotide-binding protein alpha-9 subunit (342 aa).

Residue glycine 2 is the site of N-myristoyl glycine attachment. Cysteine 3 carries the S-palmitoyl cysteine lipid modification. The 315-residue stretch at 28–342 (REIKLLLLGS…IIQSILKLHY (315 aa)) folds into the G-alpha domain. Positions 31 to 44 (KLLLLGSGDSGKST) are G1 motif. GTP-binding positions include 36–43 (GSGDSGKS), 167–173 (LRCRQRT), 192–196 (DVGGQ), 261–264 (NKND), and alanine 316. Residues serine 43 and threonine 173 each coordinate Mg(2+). A G2 motif region spans residues 165-173 (DVLRCRQRT). The G3 motif stretch occupies residues 188 to 197 (FRLIDVGGQK). The interval 257-264 (VLFLNKND) is G4 motif. A G5 motif region spans residues 314–319 (TTATDT).

Belongs to the G-alpha family. G proteins are composed of 3 units; alpha, beta and gamma. The alpha chain contains the guanine nucleotide binding site.

Guanine nucleotide-binding proteins (G proteins) are involved as modulators or transducers in various transmembrane signaling systems. G alpha-9 antagonizes broad chemotactic response. It functions rapidly following receptor stimulation to negatively regulate PI3K/PTEN, adenylyl cyclase, and guanylyl cyclase pathways. The chain is Guanine nucleotide-binding protein alpha-9 subunit (gpaI) from Dictyostelium discoideum (Social amoeba).